We begin with the raw amino-acid sequence, 214 residues long: UPF0111 protein MJ0629 (214 aa).

It belongs to the UPF0111 family.

The chain is UPF0111 protein MJ0629 from Methanocaldococcus jannaschii (strain ATCC 43067 / DSM 2661 / JAL-1 / JCM 10045 / NBRC 100440) (Methanococcus jannaschii).